Reading from the N-terminus, the 134-residue chain is Inner membrane protein YqjE (134 aa).

Topologically, residues 1–55 (MADTHHAQGPGKSVLGIGQRIVSIMVEMVETRLRLAVVELEEEKANLFQLLLMLG) are cytoplasmic. The chain crosses the membrane as a helical span at residues 56–76 (LTMLFAAFGLMSLMVLIIWAV). Residues 77–83 (DPQYRLN) are Periplasmic-facing. Residues 84-104 (AMIATTVVLLLLALIGGIWTL) form a helical membrane-spanning segment. At 105-134 (RKSRKSTLLRHTRHELANDRQLLEEESREQ) the chain is on the cytoplasmic side.

The protein resides in the cell inner membrane. The protein is Inner membrane protein YqjE (yqjE) of Escherichia coli O157:H7.